The sequence spans 96 residues: Small ribosomal subunit protein bS6 (96 aa).

It belongs to the bacterial ribosomal protein bS6 family.

Binds together with bS18 to 16S ribosomal RNA. The sequence is that of Small ribosomal subunit protein bS6 from Synechococcus sp. (strain JA-2-3B'a(2-13)) (Cyanobacteria bacterium Yellowstone B-Prime).